Reading from the N-terminus, the 149-residue chain is Transcriptional repressor NrdR (149 aa).

A zinc finger spans residues 3–34; the sequence is CPFCTAVDTKVIDSRLVGDGSQVRRRRQCLVC. One can recognise an ATP-cone domain in the interval 49-139; that stretch reads PRVVKSDEIR…VYRSFEDVRD (91 aa).

It belongs to the NrdR family. Zn(2+) is required as a cofactor.

Its function is as follows. Negatively regulates transcription of bacterial ribonucleotide reductase nrd genes and operons by binding to NrdR-boxes. In Proteus mirabilis (strain HI4320), this protein is Transcriptional repressor NrdR.